Consider the following 392-residue polypeptide: Lipid-A-disaccharide synthase (392 aa).

Belongs to the LpxB family.

The catalysed reaction is a lipid X + a UDP-2-N,3-O-bis[(3R)-3-hydroxyacyl]-alpha-D-glucosamine = a lipid A disaccharide + UDP + H(+). The protein operates within bacterial outer membrane biogenesis; LPS lipid A biosynthesis. Functionally, condensation of UDP-2,3-diacylglucosamine and 2,3-diacylglucosamine-1-phosphate to form lipid A disaccharide, a precursor of lipid A, a phosphorylated glycolipid that anchors the lipopolysaccharide to the outer membrane of the cell. This is Lipid-A-disaccharide synthase from Syntrophotalea carbinolica (strain DSM 2380 / NBRC 103641 / GraBd1) (Pelobacter carbinolicus).